Reading from the N-terminus, the 371-residue chain is Regulatory protein RapK (371 aa).

TPR repeat units follow at residues 7-42 (EVVATTLNDWYIAIKKQKVDESIKYYSEIKKLFDEM), 93-130 (EYNFYLFEAMYEAYNKNYDRAINLYGLAEKKLAEIPDE), 175-208 (ATSTMIAAANYADMKRFEEAEQYYLEAIDIAKET), 215-248 (AQLFHNLSIVYSDWNKPDKCIESLEKAIGNESWL), 254-290 (INSLFMMIKELFKIDEKMKAINFYNKAQERLILMENK), and 331-364 (DELSYIAAKRFESIGAFEEATSFFNAKIWAEQKM).

The protein belongs to the Rap family.

The protein resides in the cytoplasm. Inhibited by PhrK, which prevents RapK-ComA interaction. Functionally, involved in the regulation of genetic competence development. Inhibits the activity of ComA, a transcriptional factor that regulates the development of genetic competence. Likely affects the activity of additional regulators, in particular Spo0A. The chain is Regulatory protein RapK (rapK) from Bacillus subtilis (strain 168).